The primary structure comprises 398 residues: Acetate kinase (398 aa).

A Mg(2+)-binding site is contributed by N10. Residue K17 coordinates ATP. Residue R91 participates in substrate binding. D148 acts as the Proton donor/acceptor in catalysis. ATP is bound by residues 208 to 212, 283 to 285, and 331 to 335; these read HLGNG, DCR, and GIGEN. E385 lines the Mg(2+) pocket.

It belongs to the acetokinase family. As to quaternary structure, homodimer. Mg(2+) is required as a cofactor. Requires Mn(2+) as cofactor.

Its subcellular location is the cytoplasm. The enzyme catalyses acetate + ATP = acetyl phosphate + ADP. It functions in the pathway metabolic intermediate biosynthesis; acetyl-CoA biosynthesis; acetyl-CoA from acetate: step 1/2. Functionally, catalyzes the formation of acetyl phosphate from acetate and ATP. Can also catalyze the reverse reaction. The protein is Acetate kinase of Shewanella pealeana (strain ATCC 700345 / ANG-SQ1).